The primary structure comprises 620 residues: Probable potassium transport system protein Kup (620 aa).

Helical transmembrane passes span 11–31 (LAFL…LYAF), 51–71 (ILSL…LLLV), 100–120 (IAML…VITP), 138–158 (LAPY…AVQA), 167–187 (FFAP…AHAI), 202–222 (AVHF…LVVL), 246–266 (WFAL…AYLL), 288–308 (LILL…SGIF), 334–354 (GQIY…FVML), 364–384 (AAYG…LVLV), 396–416 (VVTI…STST), and 418–438 (LMEG…VMYI).

This sequence belongs to the HAK/KUP transporter (TC 2.A.72) family.

Its subcellular location is the cell inner membrane. The catalysed reaction is K(+)(in) + H(+)(in) = K(+)(out) + H(+)(out). Its function is as follows. Transport of potassium into the cell. Likely operates as a K(+):H(+) symporter. The polypeptide is Probable potassium transport system protein Kup (Vibrio cholerae serotype O1 (strain ATCC 39315 / El Tor Inaba N16961)).